We begin with the raw amino-acid sequence, 729 residues long: Leucine-rich repeat flightless-interacting protein 1 (729 aa).

Thr-2 is modified (N-acetylthreonine). A Phosphoserine modification is found at Ser-16. The span at 40-65 (IRMKELERQQKEVEERPDKDFAEKGS) shows a compositional bias: basic and acidic residues. A disordered region spans residues 40-98 (IRMKELERQQKEVEERPDKDFAEKGSRNMPSLSAATLASLGGTSSRRGSGDTSISMDTE). Over residues 78–94 (SLGGTSSRRGSGDTSIS) the composition is skewed to low complexity. Residues Ser-83, Ser-84, Ser-88, Asp-90, Ser-92, and Thr-97 each carry the phosphoserine modification. The stretch at 94-194 (SMDTEASIRE…LRQREEMLEK (101 aa)) forms a coiled coil. Lys-249 participates in a covalent cross-link: Glycyl lysine isopeptide (Lys-Gly) (interchain with G-Cter in SUMO1). Residues 253–729 (VEKVGQRETL…SKSKEDCTMS (477 aa)) are disordered. Polar residues predominate over residues 260 to 272 (ETLQNSEQEQPKP). Over residues 277-297 (DCVDRGVSHPGEKAENQRPAE) the composition is skewed to basic and acidic residues. Phosphoserine is present on Ser-302. Positions 313-326 (QQVQSQDQENTSDL) are enriched in polar residues. Basic and acidic residues predominate over residues 327-343 (KNSEQIESHKVTNKSDS). Residues 344 to 354 (RASNSPEQSSC) are compositionally biased toward polar residues. 2 positions are modified to phosphoserine: Ser-346 and Ser-348. Composition is skewed to basic and acidic residues over residues 435 to 445 (KGTENHGESCL) and 482 to 494 (KADDAEGRDEKPI). The tract at residues 465-567 (EEAIVQIPQA…KNKKKKAATP (103 aa)) is DNA-binding. Over residues 506-523 (INQSGHQDTTGPGSTDAQ) the composition is skewed to polar residues. 2 positions are modified to phosphoserine: Ser-538 and Ser-547. A compositionally biased stretch (basic residues) spans 550-564 (KKTKNKKKKNKKKKA). Positions 608 to 618 (QKIRAGSREPV) are enriched in basic and acidic residues. Phosphoserine occurs at positions 614 and 670. Composition is skewed to polar residues over residues 667–684 (CDTSQIGSEEGHVTSQHG) and 693–710 (LDNSDLSGQLEGFNSESG). The segment covering 713–729 (AREEVGNSKSKEDCTMS) has biased composition (basic and acidic residues).

It belongs to the LRRFIP family. As to quaternary structure, homodimer. May also form higher oligomers. Interacts with FLII. Interacts with MYD88. Competes with FLII for MyD88-binding, even in the absence of LPS. Ubiquitously expressed.

Its subcellular location is the nucleus. It localises to the cytoplasm. Its function is as follows. Transcriptional repressor which preferentially binds to the GC-rich consensus sequence (5'-AGCCCCCGGCG-3') and may regulate expression of TNF, EGFR and PDGFA. May control smooth muscle cells proliferation following artery injury through PDGFA repression. May also bind double-stranded RNA. Positively regulates Toll-like receptor (TLR) signaling in response to agonist probably by competing with the negative FLII regulator for MYD88-binding. The sequence is that of Leucine-rich repeat flightless-interacting protein 1 (Lrrfip1) from Mus musculus (Mouse).